Reading from the N-terminus, the 301-residue chain is Sulfate adenylyltransferase subunit 2 (301 aa).

The disordered stretch occupies residues 279 to 301 (RQGRMIDHDSSGSMEEKKKQGYF).

This sequence belongs to the PAPS reductase family. CysD subfamily. Heterodimer composed of CysD, the smaller subunit, and CysN.

The catalysed reaction is sulfate + ATP + H(+) = adenosine 5'-phosphosulfate + diphosphate. The protein operates within sulfur metabolism; hydrogen sulfide biosynthesis; sulfite from sulfate: step 1/3. With CysN forms the ATP sulfurylase (ATPS) that catalyzes the adenylation of sulfate producing adenosine 5'-phosphosulfate (APS) and diphosphate, the first enzymatic step in sulfur assimilation pathway. APS synthesis involves the formation of a high-energy phosphoric-sulfuric acid anhydride bond driven by GTP hydrolysis by CysN coupled to ATP hydrolysis by CysD. The protein is Sulfate adenylyltransferase subunit 2 of Marinomonas sp. (strain MWYL1).